A 511-amino-acid polypeptide reads, in one-letter code: Probable G-protein coupled receptor 152 (511 aa).

The interval 1 to 20 (MDTAVEANLGAAGHGPRTEL) is disordered. Over 1-33 (MDTAVEANLGAAGHGPRTELSDEDYYPQGSWDT) the chain is Extracellular. The helical transmembrane segment at 34-54 (VFLVALLLLGLPANGLMAWLA) threads the bilayer. Topologically, residues 55–65 (GSQARHGAGTR) are cytoplasmic. Residues 66–86 (LALLLLSLALSDFLFLAAATF) form a helical membrane-spanning segment. The Extracellular segment spans residues 87–105 (QILEIQHGGHWPLGTAACR). A disulfide bridge links cysteine 104 with cysteine 182. A helical membrane pass occupies residues 106–126 (FYYFLWGVSYSSGLFLLTALS). Over 127–148 (LDRCLLALCPRWYPGHRPARLP) the chain is Cytoplasmic. A helical transmembrane segment spans residues 149–169 (LWVCAGVWVLATLFSVPWLVF). Over 170–194 (PEAAVWWYDLVICLDFWDTEELPLR) the chain is Extracellular. A helical membrane pass occupies residues 195-215 (MLEILGGFLPFLLLLVCHVLT). Residues 216–258 (QATACRTCCGHQPRRMACHGFARVAKTILSAYVVLRLPYQLAQ) lie on the Cytoplasmic side of the membrane. Residues 259-279 (LLYLAFLWDVYPGYLLWEALV) traverse the membrane as a helical segment. Residues 280–282 (YSD) lie on the Extracellular side of the membrane. Residues 283–303 (YLILLNSCLSPFLCLAASADL) traverse the membrane as a helical segment. At 304 to 511 (RALLRTVLSS…PEEAPSAGPT (208 aa)) the chain is on the cytoplasmic side. Disordered stretches follow at residues 328 to 349 (PAEPQTLPGPTSEGQSRLDSVV), 361 to 386 (SDSVVQPEVSPSAQPQSDSVAQPTVG), and 407 to 511 (PQLD…AGPT). Composition is skewed to polar residues over residues 335 to 345 (PGPTSEGQSRL) and 369 to 386 (VSPSAQPQSDSVAQPTVG). A compositionally biased stretch (low complexity) spans 419–433 (PSAQPQSKSVVQPQV). 2 stretches are compositionally biased toward polar residues: residues 435-453 (PLTQPQLDPVAQPQSNTET) and 462-473 (SASNPGEENSSG).

Belongs to the G-protein coupled receptor 1 family.

It localises to the cell membrane. In terms of biological role, orphan receptor. This Mus musculus (Mouse) protein is Probable G-protein coupled receptor 152 (Gpr152).